The primary structure comprises 380 residues: Glucose ABC transporter permease protein TsgB13 (380 aa).

A run of 10 helical transmembrane segments spans residues 20–40 (GTPVLTVLAALAVGGVALVAL), 59–81 (QFGLTEVLVRAVPLILAGLAVYL), 94–114 (GQLLLGALAGTWVAVNVSLPA), 115–135 (VALLPLMFLAACVAGAFWAGI), 148–166 (IITSLLLTFVAQELQSYLL), 202–222 (IPLFADVHAGLLVAVAAVVAT), 255–275 (VYLFVFLLGGAFAALGGIAEI), 282–301 (FRAAFAPGYGFTAIPIALLG), 305–325 (AVKVTLAGLFFAVLFVGGSSV), and 328–348 (AFGVPAALVEIIQALVILFLI).

Belongs to the binding-protein-dependent transport system permease family. As to quaternary structure, the complex is composed of two ATP-binding proteins (TsgD13), two transmembrane proteins (TsgB13 and TsgC13) and a solute-binding protein (TsgA13).

The protein localises to the cell membrane. Functionally, part of an ABC transporter complex involved in glucose import. Responsible for the translocation of the substrate across the membrane. The protein is Glucose ABC transporter permease protein TsgB13 (tsgB13) of Haloferax volcanii (strain ATCC 29605 / DSM 3757 / JCM 8879 / NBRC 14742 / NCIMB 2012 / VKM B-1768 / DS2) (Halobacterium volcanii).